Consider the following 1299-residue polypeptide: DNA-directed RNA polymerase subunit beta' (1299 aa).

Positions 60, 62, 75, and 78 each coordinate Zn(2+). The tract at residues 385-405 (GRRGRPVTGPGNRPLKSLSDM) is disordered. Mg(2+) contacts are provided by Asp535, Asp537, and Asp539. Zn(2+) is bound by residues Cys886, Cys962, Cys969, and Cys972.

Belongs to the RNA polymerase beta' chain family. In terms of assembly, the RNAP catalytic core consists of 2 alpha, 1 beta, 1 beta' and 1 omega subunit. When a sigma factor is associated with the core the holoenzyme is formed, which can initiate transcription. Requires Mg(2+) as cofactor. Zn(2+) is required as a cofactor.

The catalysed reaction is RNA(n) + a ribonucleoside 5'-triphosphate = RNA(n+1) + diphosphate. In terms of biological role, DNA-dependent RNA polymerase catalyzes the transcription of DNA into RNA using the four ribonucleoside triphosphates as substrates. The polypeptide is DNA-directed RNA polymerase subunit beta' (Streptomyces avermitilis (strain ATCC 31267 / DSM 46492 / JCM 5070 / NBRC 14893 / NCIMB 12804 / NRRL 8165 / MA-4680)).